A 65-amino-acid polypeptide reads, in one-letter code: Large ribosomal subunit protein bL35 (65 aa).

The protein belongs to the bacterial ribosomal protein bL35 family.

The polypeptide is Large ribosomal subunit protein bL35 (Nostoc sp. (strain PCC 7120 / SAG 25.82 / UTEX 2576)).